The chain runs to 276 residues: AT-hook motif nuclear-localized protein 17 (276 aa).

The segment covering 1 to 10 (MKGEYREQKS) has biased composition (basic and acidic residues). 2 disordered regions span residues 1 to 80 (MKGE…RDTD) and 212 to 248 (AEEEQKHSAGTGEREGQSPPVSGGGEESGQMAGSGGE). Low complexity-rich tracts occupy residues 20 to 31 (HQQQQQQQQQQH) and 40 to 49 (SSTVTPTVDD). A DNA-binding region (a.T hook) is located at residues 56–68 (RRPRGRPPGSKNK). Positions 80 to 230 (DPPMSPYILE…GTGEREGQSP (151 aa)) constitute a PPC domain. Over residues 212-227 (AEEEQKHSAGTGEREG) the composition is skewed to basic and acidic residues. Positions 233–248 (SGGGEESGQMAGSGGE) are enriched in gly residues.

The protein resides in the nucleus. Functionally, transcription factor that specifically binds AT-rich DNA sequences related to the nuclear matrix attachment regions (MARs). The chain is AT-hook motif nuclear-localized protein 17 from Arabidopsis thaliana (Mouse-ear cress).